The following is a 1015-amino-acid chain: Fibronectin-binding protein A (1015 aa).

A signal peptide spans 1-36 (MKNNLRYGIRKHKLGAASVFLGTMIVVGMGQDKEAA). The short motif at 7-18 (YGIRKHKLGAAS) is the YSIRK-G/S signaling motif element. A ligand-binding A region region spans residues 37–512 (ASEQKTTTVE…SNKADGNGKN (476 aa)). The span at 75–92 (SYSATATEQPSNATQVTT) shows a compositional bias: polar residues. The segment at 75 to 199 (SYSATATEQP…KVETGTDVTS (125 aa)) is disordered. A compositionally biased stretch (basic and acidic residues) spans 112 to 126 (TVKEEVVKEEAKPQV). Polar residues predominate over residues 129–139 (TTQSQDNSGDQ). The segment covering 179–193 (DVVEAKEASDEKVET) has biased composition (basic and acidic residues). Positions 194-512 (GTDVTSKVTV…SNKADGNGKN (319 aa)) are fibrinogen/elastin/tropoelastin-binding. The fibronectin-binding stretch occupies residues 513-873 (GQIIQNNDFE…EGQQTIEEDT (361 aa)). The stretch at 546–575 (ENQDNTPLDIDYHTAIDGEGGYVDGYIETI) is one B-1 repeat. The tract at residues 546-605 (ENQDNTPLDIDYHTAIDGEGGYVDGYIETIEETDSSAIDIDYHTAVDSEAGHVGGYTESS) is 2 X approximate tandem repeats. One copy of the B-2 repeat lies at 576-605 (EETDSSAIDIDYHTAVDSEAGHVGGYTESS). Disordered regions lie at residues 596–623 (GHVG…NSKH), 741–815 (LGYE…IDFD), 828–953 (EIIE…GKVV), and 966–992 (VAPT…NKGM). A D-1 repeat occupies 746–783 (GQNSGNQSFEEDTEEDKPKYEQGGNIVDIDFDSVPQIQ). The tract at residues 746–875 (GQNSGNQSFE…QQTIEEDTTP (130 aa)) is 4 X approximate tandem repeats. A compositionally biased stretch (polar residues) spans 780–791 (PQIQGQNNGNQS). The D-2 repeat unit spans residues 784–821 (GQNNGNQSFEEDTEKDKPKYEQGGNIIDIDFDSVPQIH). A D-3 repeat occupies 822–860 (GFNKHTEIIEEDTNKDKPNYQFGGHNSVDFEEDTLPKVS). The span at 828-839 (EIIEEDTNKDKP) shows a compositional bias: basic and acidic residues. One copy of the D-4; truncated repeat lies at 861–875 (GQNEGQQTIEEDTTP). Residues 875–935 (PPTPPTPEVP…PAEPGKPVPP (61 aa)) are compositionally biased toward pro residues. WR repeat units follow at residues 876-889 (PTPP…EPET), 890-903 (PTPP…EPET), 904-917 (PTPP…EPET), 918-931 (PTPP…EPGK), and 932-945 (PVPP…KPSK). Residues 876–945 (PTPPTPEVPS…AKEEPKKPSK (70 aa)) form a 5 X tandem repeats, Pro-rich (WR) region. Positions 979 to 983 (LPETG) match the LPXTG sorting signal motif. Threonine 982 is subject to Pentaglycyl murein peptidoglycan amidated threonine. Residues 983–1015 (GGEESTNKGMLFGGLFSILGLALLRRNKKNNKA) constitute a propeptide, removed by sortase.

The protein resides in the secreted. Its subcellular location is the cell wall. In terms of biological role, promotes bacterial attachment to multiple substrates, such as fibronectin (Fn), fibrinogen (Fg), elastin peptides and tropoelastin. This confers to S.aureus the ability to invade endothelial cells. Promotes adherence to and aggregation of activated platelets. This Staphylococcus aureus (strain MSSA476) protein is Fibronectin-binding protein A (fnbA).